Reading from the N-terminus, the 348-residue chain is Dihydroorotase (348 aa).

2 residues coordinate Zn(2+): H17 and H19. Residues 19–21 (HLR) and N45 contribute to the substrate site. Residues K103, H140, and H178 each coordinate Zn(2+). K103 is modified (N6-carboxylysine). H140 contributes to the substrate binding site. Substrate is bound at residue L223. Residue D251 participates in Zn(2+) binding. D251 is an active-site residue. Positions 255 and 267 each coordinate substrate.

It belongs to the metallo-dependent hydrolases superfamily. DHOase family. Class II DHOase subfamily. Homodimer. The cofactor is Zn(2+).

The enzyme catalyses (S)-dihydroorotate + H2O = N-carbamoyl-L-aspartate + H(+). The protein operates within pyrimidine metabolism; UMP biosynthesis via de novo pathway; (S)-dihydroorotate from bicarbonate: step 3/3. In terms of biological role, catalyzes the reversible cyclization of carbamoyl aspartate to dihydroorotate. This Shigella boydii serotype 18 (strain CDC 3083-94 / BS512) protein is Dihydroorotase.